The sequence spans 23 residues: NVQLDPFFQEQQQYYQQQQAFFL.

The chain is Prolamin alpha-3 from Dactylis glomerata (Orchard grass).